Reading from the N-terminus, the 223-residue chain is Icarapin (223 aa).

A signal peptide spans 1 to 19 (MKTLGVLFIAAWFIACTHS). 4 N-linked (GlcNAc...) asparagine glycosylation sites follow: asparagine 126, asparagine 142, asparagine 168, and asparagine 193. Polar residues predominate over residues 186–203 (LPTLIGKNETSTQSSRSV). The disordered stretch occupies residues 186 to 223 (LPTLIGKNETSTQSSRSVESVEDFDNEIPKNQGDVLTA).

Expressed by the venom duct.

The protein localises to the secreted. This is Icarapin from Apis mellifera carnica (Carniolan honeybee).